We begin with the raw amino-acid sequence, 136 residues long: Ribonuclease P protein component (136 aa).

The tract at residues 39-59 is disordered; sequence LPDVSSSKPARDTGAEQTSAP.

It belongs to the RnpA family. As to quaternary structure, consists of a catalytic RNA component (M1 or rnpB) and a protein subunit.

It carries out the reaction Endonucleolytic cleavage of RNA, removing 5'-extranucleotides from tRNA precursor.. RNaseP catalyzes the removal of the 5'-leader sequence from pre-tRNA to produce the mature 5'-terminus. It can also cleave other RNA substrates such as 4.5S RNA. The protein component plays an auxiliary but essential role in vivo by binding to the 5'-leader sequence and broadening the substrate specificity of the ribozyme. The polypeptide is Ribonuclease P protein component (Salinispora tropica (strain ATCC BAA-916 / DSM 44818 / JCM 13857 / NBRC 105044 / CNB-440)).